The following is a 183-amino-acid chain: Acireductone dioxygenase (183 aa).

Fe(2+)-binding residues include His-95, His-97, Glu-101, and His-139. Ni(2+) contacts are provided by His-95, His-97, Glu-101, and His-139.

Belongs to the acireductone dioxygenase (ARD) family. In terms of assembly, monomer. Fe(2+) serves as cofactor. It depends on Ni(2+) as a cofactor.

It catalyses the reaction 1,2-dihydroxy-5-(methylsulfanyl)pent-1-en-3-one + O2 = 3-(methylsulfanyl)propanoate + CO + formate + 2 H(+). The catalysed reaction is 1,2-dihydroxy-5-(methylsulfanyl)pent-1-en-3-one + O2 = 4-methylsulfanyl-2-oxobutanoate + formate + 2 H(+). It participates in amino-acid biosynthesis; L-methionine biosynthesis via salvage pathway; L-methionine from S-methyl-5-thio-alpha-D-ribose 1-phosphate: step 5/6. In terms of biological role, catalyzes 2 different reactions between oxygen and the acireductone 1,2-dihydroxy-3-keto-5-methylthiopentene (DHK-MTPene) depending upon the metal bound in the active site. Fe-containing acireductone dioxygenase (Fe-ARD) produces formate and 2-keto-4-methylthiobutyrate (KMTB), the alpha-ketoacid precursor of methionine in the methionine recycle pathway. Ni-containing acireductone dioxygenase (Ni-ARD) produces methylthiopropionate, carbon monoxide and formate, and does not lie on the methionine recycle pathway. The polypeptide is Acireductone dioxygenase (Aquifex aeolicus (strain VF5)).